We begin with the raw amino-acid sequence, 532 residues long: KICSTOR complex protein ITFG2 (532 aa).

The stretch at 19–48 (FPHAICLGDVDNDTLNELVVGDTSGKLSVY) is one FG-GAP 1; atypical repeat. At Ser-104 the chain carries Phosphoserine. The stretch at 126–155 (NTKVMLISDIDGDGRCELVVGYTDRVVRAF) is one FG-GAP 2; atypical repeat. Residues 248-271 (PHPQQERLHSPHRQHQASHSPDSS) form a disordered region.

In terms of assembly, part of the KICSTOR complex composed of KPTN, ITFG2, KICS2 and SZT2. SZT2 probably serves as a link between the other three proteins in the KICSTOR complex and may mediate the direct interaction with the GATOR complex via GATOR1. The KICSTOR complex interacts directly with the GATOR1 complex and most probably indirectly with the GATOR2 complex in an amino acid-independent manner.

Its subcellular location is the lysosome membrane. As part of the KICSTOR complex functions in the amino acid-sensing branch of the TORC1 signaling pathway. Recruits, in an amino acid-independent manner, the GATOR1 complex to the lysosomal membranes and allows its interaction with GATOR2 and the RAG GTPases. Functions upstream of the RAG GTPases and is required to negatively regulate mTORC1 signaling in absence of amino acids. In absence of the KICSTOR complex mTORC1 is constitutively localized to the lysosome and activated. The KICSTOR complex is also probably involved in the regulation of mTORC1 by glucose. This is KICSTOR complex protein ITFG2 from Bos taurus (Bovine).